Here is a 297-residue protein sequence, read N- to C-terminus: 4-hydroxy-tetrahydrodipicolinate synthase (297 aa).

Thr49 lines the pyruvate pocket. The Proton donor/acceptor role is filled by Tyr137. Residue Lys166 is the Schiff-base intermediate with substrate of the active site. Ile208 serves as a coordination point for pyruvate.

Belongs to the DapA family. As to quaternary structure, homotetramer; dimer of dimers.

The protein resides in the cytoplasm. It carries out the reaction L-aspartate 4-semialdehyde + pyruvate = (2S,4S)-4-hydroxy-2,3,4,5-tetrahydrodipicolinate + H2O + H(+). It functions in the pathway amino-acid biosynthesis; L-lysine biosynthesis via DAP pathway; (S)-tetrahydrodipicolinate from L-aspartate: step 3/4. In terms of biological role, catalyzes the condensation of (S)-aspartate-beta-semialdehyde [(S)-ASA] and pyruvate to 4-hydroxy-tetrahydrodipicolinate (HTPA). The polypeptide is 4-hydroxy-tetrahydrodipicolinate synthase (Prosthecochloris aestuarii (strain DSM 271 / SK 413)).